Here is a 468-residue protein sequence, read N- to C-terminus: UDP-N-acetylmuramate--L-alanine ligase (468 aa).

107 to 113 (GTHGKTT) is an ATP binding site.

This sequence belongs to the MurCDEF family.

It is found in the cytoplasm. It carries out the reaction UDP-N-acetyl-alpha-D-muramate + L-alanine + ATP = UDP-N-acetyl-alpha-D-muramoyl-L-alanine + ADP + phosphate + H(+). Its pathway is cell wall biogenesis; peptidoglycan biosynthesis. Its function is as follows. Cell wall formation. This Roseiflexus sp. (strain RS-1) protein is UDP-N-acetylmuramate--L-alanine ligase.